The following is a 340-amino-acid chain: Glyceraldehyde-3-phosphate dehydrogenase (340 aa).

Residues 11-12 (TI) and Gly-109 contribute to the NAD(+) site. 138-140 (SCN) lines the D-glyceraldehyde 3-phosphate pocket. The Nucleophile role is filled by Cys-139. Arg-167 contributes to the NAD(+) binding site. D-glyceraldehyde 3-phosphate is bound at residue 193–194 (HA). Gln-300 is an NAD(+) binding site.

Belongs to the glyceraldehyde-3-phosphate dehydrogenase family. In terms of assembly, homotetramer.

The protein resides in the cytoplasm. The enzyme catalyses D-glyceraldehyde 3-phosphate + phosphate + NADP(+) = (2R)-3-phospho-glyceroyl phosphate + NADPH + H(+). It carries out the reaction D-glyceraldehyde 3-phosphate + phosphate + NAD(+) = (2R)-3-phospho-glyceroyl phosphate + NADH + H(+). It functions in the pathway carbohydrate degradation; glycolysis; pyruvate from D-glyceraldehyde 3-phosphate: step 1/5. The chain is Glyceraldehyde-3-phosphate dehydrogenase from Metallosphaera sedula (strain ATCC 51363 / DSM 5348 / JCM 9185 / NBRC 15509 / TH2).